A 74-amino-acid chain; its full sequence is UPF0154 protein LSL_0542 (74 aa).

Residues 5–25 traverse the membrane as a helical segment; the sequence is IWVLIVIIAAVLGFVGGFFAA.

The protein belongs to the UPF0154 family.

It localises to the cell membrane. The polypeptide is UPF0154 protein LSL_0542 (Ligilactobacillus salivarius (strain UCC118) (Lactobacillus salivarius)).